Here is a 90-residue protein sequence, read N- to C-terminus: uncharacterized protein (90 aa).

Belongs to the barstar family.

This is an uncharacterized protein from Escherichia coli O157:H7.